A 475-amino-acid chain; its full sequence is Methylenetetrahydrofolate--tRNA-(uracil-5-)-methyltransferase TrmFO (475 aa).

Residue 9–14 (GGGLAG) coordinates FAD. Positions 427–447 (APRNETGRRLRGPEKAALKKR) are disordered.

It belongs to the MnmG family. TrmFO subfamily. The cofactor is FAD.

Its subcellular location is the cytoplasm. The enzyme catalyses uridine(54) in tRNA + (6R)-5,10-methylene-5,6,7,8-tetrahydrofolate + NADH + H(+) = 5-methyluridine(54) in tRNA + (6S)-5,6,7,8-tetrahydrofolate + NAD(+). The catalysed reaction is uridine(54) in tRNA + (6R)-5,10-methylene-5,6,7,8-tetrahydrofolate + NADPH + H(+) = 5-methyluridine(54) in tRNA + (6S)-5,6,7,8-tetrahydrofolate + NADP(+). Its function is as follows. Catalyzes the folate-dependent formation of 5-methyl-uridine at position 54 (M-5-U54) in all tRNAs. In Methylobacterium radiotolerans (strain ATCC 27329 / DSM 1819 / JCM 2831 / NBRC 15690 / NCIMB 10815 / 0-1), this protein is Methylenetetrahydrofolate--tRNA-(uracil-5-)-methyltransferase TrmFO.